Consider the following 317-residue polypeptide: MKPLNIIFAGTPDFAAQHLQALLQSQHNVLAVYTQPDKPAGRGQTLRASAVKILAEKHHIPVYQPKSLRKVEVQENLSKLNADVMVVVAYGLILPLAVLQTFPLGCLNVHGSLLPRWRGAAPIQRAIWAGDKKTGVTIMQMNEGLDTGDMLHKVCCDITPTETSTSLYTKLANIAPKALLEVLDGLEQSLFKAEVQDESLSNYAEKLSKEEAKLDWSLSAEQLERCIRAFNPWPMSYFVTQDSQGTLQTLKVYQASVLPHQDKPCGTILAADKRGIQVATANGVLNLEQLQPAGKKPMSARDLLNSRADWFKIGQVL.

112 to 115 (SLLP) is a (6S)-5,6,7,8-tetrahydrofolate binding site.

It belongs to the Fmt family.

It catalyses the reaction L-methionyl-tRNA(fMet) + (6R)-10-formyltetrahydrofolate = N-formyl-L-methionyl-tRNA(fMet) + (6S)-5,6,7,8-tetrahydrofolate + H(+). Its function is as follows. Attaches a formyl group to the free amino group of methionyl-tRNA(fMet). The formyl group appears to play a dual role in the initiator identity of N-formylmethionyl-tRNA by promoting its recognition by IF2 and preventing the misappropriation of this tRNA by the elongation apparatus. The sequence is that of Methionyl-tRNA formyltransferase from Histophilus somni (strain 129Pt) (Haemophilus somnus).